Consider the following 546-residue polypeptide: Glucose-6-phosphate isomerase (546 aa).

E358 (proton donor) is an active-site residue. Active-site residues include H389 and K504.

Belongs to the GPI family.

Its subcellular location is the cytoplasm. The enzyme catalyses alpha-D-glucose 6-phosphate = beta-D-fructose 6-phosphate. It participates in carbohydrate biosynthesis; gluconeogenesis. The protein operates within carbohydrate degradation; glycolysis; D-glyceraldehyde 3-phosphate and glycerone phosphate from D-glucose: step 2/4. Catalyzes the reversible isomerization of glucose-6-phosphate to fructose-6-phosphate. The sequence is that of Glucose-6-phosphate isomerase from Desulfosudis oleivorans (strain DSM 6200 / JCM 39069 / Hxd3) (Desulfococcus oleovorans).